The primary structure comprises 210 residues: Probable nicotinate-nucleotide adenylyltransferase (210 aa).

This sequence belongs to the NadD family.

It catalyses the reaction nicotinate beta-D-ribonucleotide + ATP + H(+) = deamido-NAD(+) + diphosphate. Its pathway is cofactor biosynthesis; NAD(+) biosynthesis; deamido-NAD(+) from nicotinate D-ribonucleotide: step 1/1. Its function is as follows. Catalyzes the reversible adenylation of nicotinate mononucleotide (NaMN) to nicotinic acid adenine dinucleotide (NaAD). The sequence is that of Probable nicotinate-nucleotide adenylyltransferase from Methylococcus capsulatus (strain ATCC 33009 / NCIMB 11132 / Bath).